Here is a 152-residue protein sequence, read N- to C-terminus: Cuticle protein 64 (152 aa).

7 tandem repeats follow at residues 27-30 (AAPA), 33-37 (AAPAV), 39-42 (AAPA), 86-89 (AAPV), 92-95 (AAPA), 98-101 (AAPA), and 127-130 (AAPA).

In terms of biological role, component of the cuticle of migratory locust which contains more than 100 different structural proteins. The protein is Cuticle protein 64 of Locusta migratoria (Migratory locust).